The primary structure comprises 380 residues: Cytochrome b (380 aa).

4 helical membrane-spanning segments follow: residues 34–54, 78–99, 114–134, and 179–199; these read FGSLLGICLATQILTGLLLAM, WLIRNLHANGASFFFICVYLHI, WNTGILLLLTLMATAFVGYVL, and FFALHFLLPFAIAGLTLIHLT. 2 residues coordinate heme b: H84 and H98. Heme b is bound by residues H183 and H197. An a ubiquinone-binding site is contributed by H202. 4 consecutive transmembrane segments (helical) span residues 227-247, 289-309, 321-341, and 348-368; these read LKDALGFMLMFLPLTTLALFS, LGGVLALAASVLILFLSPLLH, LSQLLFWTLVANLFILTWVGS, and FIIIGQLASLTYFTILLILFP.

The protein belongs to the cytochrome b family. The cytochrome bc1 complex contains 11 subunits: 3 respiratory subunits (MT-CYB, CYC1 and UQCRFS1), 2 core proteins (UQCRC1 and UQCRC2) and 6 low-molecular weight proteins (UQCRH/QCR6, UQCRB/QCR7, UQCRQ/QCR8, UQCR10/QCR9, UQCR11/QCR10 and a cleavage product of UQCRFS1). This cytochrome bc1 complex then forms a dimer. The cofactor is heme b.

It is found in the mitochondrion inner membrane. Functionally, component of the ubiquinol-cytochrome c reductase complex (complex III or cytochrome b-c1 complex) that is part of the mitochondrial respiratory chain. The b-c1 complex mediates electron transfer from ubiquinol to cytochrome c. Contributes to the generation of a proton gradient across the mitochondrial membrane that is then used for ATP synthesis. This Oceanites oceanicus (Wilson's storm petrel) protein is Cytochrome b (MT-CYB).